The sequence spans 691 residues: Calcium-binding and coiled-coil domain-containing protein 1 (691 aa).

Positions 1-30 are p300 KIX-binding; sequence MEESSLSRAPSRGGVNFLNVARTYIPNTKV. The N-terminal AD (CTNNB1 binding site) stretch occupies residues 1–190; sequence MEESSLSRAP…VQELEAALAT (190 aa). The residue at position 4 (S4) is a Phosphoserine. The segment at 45-125 is interaction with GATA1; the sequence is SDWIGIFKVE…FQFREPRPMD (81 aa). Coiled-coil stretches lie at residues 145 to 205, 232 to 339, and 417 to 514; these read KATV…YKGL, ELED…AELE, and QSME…ADEK. The interval 501-691 is C-terminal AD (CTNNB1 binding site); interaction with CCAR1; that stretch reads RKLEARLEKV…FSTQDPFTFE (191 aa). Residues 512–605 form a disordered region; it reads DEKWTEDAAT…DSEAEDEKSV (94 aa). The segment at 653 to 679 adopts a UBZ1-type zinc-finger fold; it reads WKECPICKERFPAESDKDALEGHMDGH. C656, C659, H675, and H679 together coordinate Zn(2+).

Belongs to the CALCOCO family. In terms of assembly, part of a calphoglin complex consisting of CALCOCO1, PPA1 and PGM. Interacts with the bHLH-PAS domains of GRIP1, AHR and ARNT. Interacts with CTNNB1 via both its N- and C-terminal regions. Interacts with EP300. Interacts with CCAR1 (via N-terminus) and GATA1. As to expression, expressed in all tissues examined except spleen, with high levels of expression in the heart and kidney.

The protein localises to the cytoplasm. The protein resides in the nucleus. In terms of biological role, functions as a coactivator for aryl hydrocarbon and nuclear receptors (NR). Recruited to promoters through its contact with the N-terminal basic helix-loop-helix-Per-Arnt-Sim (PAS) domain of transcription factors or coactivators, such as NCOA2. During ER-activation acts synergistically in combination with other NCOA2-binding proteins, such as EP300, CREBBP and CARM1. Involved in the transcriptional activation of target genes in the Wnt/CTNNB1 pathway. Functions as a secondary coactivator in LEF1-mediated transcriptional activation via its interaction with CTNNB1. Coactivator function for nuclear receptors and LEF1/CTNNB1 involves differential utilization of two different activation regions. In association with CCAR1 enhances GATA1- and MED1-mediated transcriptional activation from the gamma-globin promoter during erythroid differentiation of K562 erythroleukemia cells. The polypeptide is Calcium-binding and coiled-coil domain-containing protein 1 (Calcoco1) (Mus musculus (Mouse)).